The sequence spans 81 residues: Sulfur carrier protein TusA (81 aa).

Residue cysteine 19 is the Cysteine persulfide intermediate of the active site.

The protein belongs to the sulfur carrier protein TusA family.

It is found in the cytoplasm. Sulfur carrier protein which probably makes part of a sulfur-relay system. The polypeptide is Sulfur carrier protein TusA (Shewanella sediminis (strain HAW-EB3)).